We begin with the raw amino-acid sequence, 222 residues long: Tegument protein UL26 (222 aa).

Belongs to the herpesviridae US22 family. In terms of assembly, interacts with UL25. Interacts with ISGylation machinery components ISG15, UBA7 and HERC5; these interactions inhibit global protein ISGylation. Post-translationally, ISGylated; ISGylation regulates UL26 stability and inhibits its activities to suppress NF-kappa-B signaling.

The protein resides in the virion tegument. The protein localises to the host nucleus. Functionally, plays a role in the inhibition of host NF-kappa-B. This inhibition affects both the canonical and the non-canonical pathways. Blocks the induction of host IKK phosphorylation. May also influence the normal phosphorylation state of several tegument proteins including pp28 in virions. Also suppresses virus-induced ISGylation independent of its own ISGylation. This chain is Tegument protein UL26 (UL26), found in Homo sapiens (Human).